The following is a 497-amino-acid chain: Putative endothelial lipase (497 aa).

The signal sequence occupies residues 1–23 (MRACPFLLLLLLPLLLSLGRIAA). Residues Cys-73 and Cys-86 are joined by a disulfide bond. N-linked (GlcNAc...) asparagine glycosylation is found at Asn-89 and Asn-145. Ser-178 functions as the Nucleophile in the catalytic mechanism. The Charge relay system role is filled by Asp-202. A disulfide bridge connects residues Cys-262 and Cys-282. The Charge relay system role is filled by His-284. Disulfide bonds link Cys-307/Cys-326 and Cys-318/Cys-321. Heparin is bound at residue 335–347 (KMRNKRNSKMYLK). The PLAT domain occupies 357–492 (FHYQLKIHVF…CLKMVKVEKH (136 aa)). N-linked (GlcNAc...) asparagine glycosylation occurs at Asn-403.

Belongs to the AB hydrolase superfamily. Lipase family. As to quaternary structure, head to tail homodimer. Expressed by the venom gland.

The protein localises to the secreted. It carries out the reaction a triacylglycerol + H2O = a diacylglycerol + a fatty acid + H(+). Its activity is regulated as follows. Inhibited by serum. In terms of biological role, has phospholipase and triglyceride lipase activities. In Crotalus adamanteus (Eastern diamondback rattlesnake), this protein is Putative endothelial lipase.